Here is a 311-residue protein sequence, read N- to C-terminus: Chemotaxis protein CheV3 (311 aa).

The region spanning 13-164 is the CheW-like domain; that stretch reads EIELVDFRIY…LESILDDLKL (152 aa). Residues 182–308 form the Response regulatory domain; that stretch reads EVLFLDDSKT…FTEEISKILD (127 aa). Residue Asp-241 is modified to 4-aspartylphosphate.

Its function is as follows. Plays a role in chemotaxis signal transduction system in order to colonize the host stomach. May act as a phosphate sink to control the flow of phosphate to CheAY. The polypeptide is Chemotaxis protein CheV3 (Helicobacter pylori (strain ATCC 700392 / 26695) (Campylobacter pylori)).